Here is a 317-residue protein sequence, read N- to C-terminus: 17-beta-hydroxysteroid dehydrogenase type 6 (317 aa).

The signal sequence occupies residues 1-17; that stretch reads MWFYLVTLVGLYHLLRW. 33-57 is a binding site for NAD(+); it reads FITGCDSGFGNLLARQLDRRGMRVL. Residues Asn71 and Asn161 are each glycosylated (N-linked (GlcNAc...) asparagine). Position 164 (Ser164) interacts with substrate. Tyr176 acts as the Proton acceptor in catalysis.

It belongs to the short-chain dehydrogenases/reductases (SDR) family. Detected in liver.

Its subcellular location is the microsome membrane. The protein localises to the early endosome membrane. It catalyses the reaction all-trans-retinol--[retinol-binding protein] + NAD(+) = all-trans-retinal--[retinol-binding protein] + NADH + H(+). The enzyme catalyses all-trans-retinol + NAD(+) = all-trans-retinal + NADH + H(+). It carries out the reaction androsterone + NAD(+) = 5alpha-androstan-3,17-dione + NADH + H(+). The catalysed reaction is testosterone + NAD(+) = androst-4-ene-3,17-dione + NADH + H(+). It catalyses the reaction 5alpha-androstane-3alpha,17beta-diol + NAD(+) = 17beta-hydroxy-5alpha-androstan-3-one + NADH + H(+). The enzyme catalyses 17beta-estradiol + NAD(+) = estrone + NADH + H(+). It carries out the reaction 17beta-estradiol + NADP(+) = estrone + NADPH + H(+). The catalysed reaction is 3alpha-hydroxy-5alpha-pregnan-20-one + NAD(+) = 5alpha-pregnane-3,20-dione + NADH + H(+). It catalyses the reaction 5alpha-androstane-3beta,17beta-diol + NAD(+) = 17beta-hydroxy-5alpha-androstan-3-one + NADH + H(+). The enzyme catalyses 3beta-hydroxy-5alpha-androstan-17-one + NAD(+) = 5alpha-androstan-3,17-dione + NADH + H(+). Its activity is regulated as follows. Inhibited by carbenoxolone and phenyl arsenoxide. Its function is as follows. NAD-dependent oxidoreductase with broad substrate specificity that shows both oxidative and reductive activity (in vitro). Has 17-beta-hydroxysteroid dehydrogenase activity towards various steroids (in vitro). Converts 5-alpha-androstan-3-alpha,17-beta-diol to androsterone and estradiol to estrone (in vitro). Has 3-alpha-hydroxysteroid dehydrogenase activity towards androsterone (in vitro). Has retinol dehydrogenase activity towards all-trans-retinol (in vitro). The protein is 17-beta-hydroxysteroid dehydrogenase type 6 (Hsd17b6) of Mus musculus (Mouse).